The primary structure comprises 275 residues: Caspase-3 (275 aa).

Methionine 1 bears the N-acetylmethionine mark. Propeptides lie at residues 1–9 (MENTENSVD) and 10–28 (SKSI…KSMD). The residue at position 11 (lysine 11) is an N6-acetyllysine. Serine 26 is subject to Phosphoserine. Residues histidine 121 and cysteine 163 contribute to the active site. Cysteine 163 bears the S-nitrosocysteine; in inhibited form mark.

It belongs to the peptidase C14A family. Heterotetramer that consists of two anti-parallel arranged heterodimers, each one formed by a 17 kDa (p17) and a 12 kDa (p12) subunit. Interacts with BIRC6/bruce. Cleavage by granzyme B, caspase-6, caspase-8 and caspase-10 generates the two active subunits. Additional processing of the propeptides is likely due to the autocatalytic activity of the activated protease. Active heterodimers between the small subunit of caspase-7 protease and the large subunit of caspase-3 also occur and vice versa. Post-translationally, S-nitrosylated on its catalytic site cysteine in unstimulated cell lines and denitrosylated upon activation of the Fas apoptotic pathway, associated with an increase in intracellular caspase activity. Fas therefore activates caspase-3 not only by inducing the cleavage of the caspase zymogen to its active subunits, but also by stimulating the denitrosylation of its active site thiol. In terms of processing, ubiquitinated by BIRC6; this activity is inhibited by DIABLO/SMAC.

The protein resides in the cytoplasm. The enzyme catalyses Strict requirement for an Asp residue at positions P1 and P4. It has a preferred cleavage sequence of Asp-Xaa-Xaa-Asp-|- with a hydrophobic amino-acid residue at P2 and a hydrophilic amino-acid residue at P3, although Val or Ala are also accepted at this position.. With respect to regulation, inhibited by BIRC6; following inhibition of BIRC6-caspase binding by DIABLO/SMAC, BIRC6 is subjected to caspase cleavage, leading to an increase in active caspases. Functionally, involved in the activation cascade of caspases responsible for apoptosis execution. At the onset of apoptosis, it proteolytically cleaves poly(ADP-ribose) polymerase PARP1 at a '216-Asp-|-Gly-217' bond. Cleaves and activates sterol regulatory element binding proteins (SREBPs) between the basic helix-loop-helix leucine zipper domain and the membrane attachment domain. Cleaves and activates caspase-6, -7 and -9 (CASP6, CASP7 and CASP9, respectively). Cleaves and inactivates interleukin-18 (IL18). Triggers cell adhesion in sympathetic neurons through RET cleavage. Cleaves IL-1 beta between an Asp and an Ala, releasing the mature cytokine which is involved in a variety of inflammatory processes. Cleaves and inhibits serine/threonine-protein kinase AKT1 in response to oxidative stress. Acts as an inhibitor of type I interferon production during virus-induced apoptosis by mediating cleavage of antiviral proteins CGAS, IRF3 and MAVS, thereby preventing cytokine overproduction. Also involved in pyroptosis by mediating cleavage and activation of gasdermin-E (GSDME). Cleaves XRCC4 and phospholipid scramblase proteins XKR4, XKR8 and XKR9, leading to promote phosphatidylserine exposure on apoptotic cell surface. Cleaves BIRC6 following inhibition of BIRC6-caspase binding by DIABLO/SMAC. This chain is Caspase-3 (CASP3), found in Bos taurus (Bovine).